A 173-amino-acid chain; its full sequence is Translocon-associated protein subunit delta (173 aa).

Residues 1-23 (MAAMASFGALALLLLSGLSCCSA) form the signal peptide. The Lumenal portion of the chain corresponds to 24 to 144 (EACLEPQITP…SVDHRGTWNG (121 aa)). An intrachain disulfide couples Cys26 to Cys57. Lys73 participates in a covalent cross-link: Glycyl lysine isopeptide (Lys-Gly) (interchain with G-Cter in ubiquitin). The chain crosses the membrane as a helical span at residues 145–165 (PWVSTEVLAAAIGIVIYYLAF). Topologically, residues 166–173 (SAKSHIQA) are cytoplasmic.

Belongs to the TRAP-delta family. Heterotetramer of TRAP-alpha, TRAP-beta, TRAP-delta and TRAP-gamma.

Its subcellular location is the endoplasmic reticulum membrane. Functionally, TRAP proteins are part of a complex whose function is to bind calcium to the ER membrane and thereby regulate the retention of ER resident proteins. This chain is Translocon-associated protein subunit delta (Ssr4), found in Rattus norvegicus (Rat).